A 316-amino-acid polypeptide reads, in one-letter code: Glutathione synthetase (316 aa).

The 188-residue stretch at 124–311 (NEKLAALLFP…IAGLLFDAIE (188 aa)) folds into the ATP-grasp domain. Residue 151-208 (FVLEHGQAVLKPLDGMGGRSIFRSGSGDPNLNVILETLTDGNRKLTLAQRFIPDITAG) coordinates ATP. Residues Glu282 and Asn284 each contribute to the Mg(2+) site.

This sequence belongs to the prokaryotic GSH synthase family. Mg(2+) is required as a cofactor. Mn(2+) serves as cofactor.

The catalysed reaction is gamma-L-glutamyl-L-cysteine + glycine + ATP = glutathione + ADP + phosphate + H(+). It functions in the pathway sulfur metabolism; glutathione biosynthesis; glutathione from L-cysteine and L-glutamate: step 2/2. The chain is Glutathione synthetase from Xanthomonas axonopodis pv. citri (strain 306).